Here is a 340-residue protein sequence, read N- to C-terminus: Glycerol-3-phosphate dehydrogenase [NAD(P)+] (340 aa).

The NADPH site is built by Ser-11, Trp-12, Arg-33, and Lys-106. Sn-glycerol 3-phosphate contacts are provided by Lys-106, Gly-137, and Ser-139. An NADPH-binding site is contributed by Ala-141. Sn-glycerol 3-phosphate is bound by residues Lys-192, Asp-245, Ser-255, Arg-256, and Asn-257. Lys-192 (proton acceptor) is an active-site residue. Arg-256 serves as a coordination point for NADPH. Val-280 and Glu-282 together coordinate NADPH.

It belongs to the NAD-dependent glycerol-3-phosphate dehydrogenase family.

It is found in the cytoplasm. It carries out the reaction sn-glycerol 3-phosphate + NAD(+) = dihydroxyacetone phosphate + NADH + H(+). The catalysed reaction is sn-glycerol 3-phosphate + NADP(+) = dihydroxyacetone phosphate + NADPH + H(+). It participates in membrane lipid metabolism; glycerophospholipid metabolism. Functionally, catalyzes the reduction of the glycolytic intermediate dihydroxyacetone phosphate (DHAP) to sn-glycerol 3-phosphate (G3P), the key precursor for phospholipid synthesis. The chain is Glycerol-3-phosphate dehydrogenase [NAD(P)+] from Bacillus cereus (strain 03BB102).